The sequence spans 529 residues: Bifunctional purine biosynthesis protein PurH (529 aa).

In terms of domain architecture, MGS-like spans 1 to 148 (MQQRRPVRRA…KNHKDVAIVV (148 aa)).

The protein belongs to the PurH family.

It carries out the reaction (6R)-10-formyltetrahydrofolate + 5-amino-1-(5-phospho-beta-D-ribosyl)imidazole-4-carboxamide = 5-formamido-1-(5-phospho-D-ribosyl)imidazole-4-carboxamide + (6S)-5,6,7,8-tetrahydrofolate. The catalysed reaction is IMP + H2O = 5-formamido-1-(5-phospho-D-ribosyl)imidazole-4-carboxamide. The protein operates within purine metabolism; IMP biosynthesis via de novo pathway; 5-formamido-1-(5-phospho-D-ribosyl)imidazole-4-carboxamide from 5-amino-1-(5-phospho-D-ribosyl)imidazole-4-carboxamide (10-formyl THF route): step 1/1. It participates in purine metabolism; IMP biosynthesis via de novo pathway; IMP from 5-formamido-1-(5-phospho-D-ribosyl)imidazole-4-carboxamide: step 1/1. The protein is Bifunctional purine biosynthesis protein PurH of Salmonella typhi.